The sequence spans 264 residues: Thymidylate synthase (264 aa).

Arginine 21 provides a ligand contact to dUMP. A (6R)-5,10-methylene-5,6,7,8-tetrahydrofolate-binding site is contributed by histidine 51. A dUMP-binding site is contributed by 126 to 127 (RR). Cysteine 146 serves as the catalytic Nucleophile. DUMP-binding positions include 166–169 (RSCD), asparagine 177, and 207–209 (HLY). Position 169 (aspartate 169) interacts with (6R)-5,10-methylene-5,6,7,8-tetrahydrofolate. (6R)-5,10-methylene-5,6,7,8-tetrahydrofolate is bound at residue alanine 263.

Belongs to the thymidylate synthase family. Bacterial-type ThyA subfamily. In terms of assembly, homodimer.

The protein localises to the cytoplasm. The catalysed reaction is dUMP + (6R)-5,10-methylene-5,6,7,8-tetrahydrofolate = 7,8-dihydrofolate + dTMP. The protein operates within pyrimidine metabolism; dTTP biosynthesis. Its function is as follows. Catalyzes the reductive methylation of 2'-deoxyuridine-5'-monophosphate (dUMP) to 2'-deoxythymidine-5'-monophosphate (dTMP) while utilizing 5,10-methylenetetrahydrofolate (mTHF) as the methyl donor and reductant in the reaction, yielding dihydrofolate (DHF) as a by-product. This enzymatic reaction provides an intracellular de novo source of dTMP, an essential precursor for DNA biosynthesis. The polypeptide is Thymidylate synthase (Pectobacterium carotovorum subsp. carotovorum (strain PC1)).